Reading from the N-terminus, the 650-residue chain is Threonine--tRNA ligase (650 aa).

Positions 3 to 65 (DLVKVTLPDG…ERDARLEIVT (63 aa)) constitute a TGS domain. The catalytic stretch occupies residues 248 to 548 (DHRRLGPQLG…LVEHYAGAFP (301 aa)). Residues cysteine 349, histidine 400, and histidine 525 each contribute to the Zn(2+) site.

It belongs to the class-II aminoacyl-tRNA synthetase family. Homodimer. It depends on Zn(2+) as a cofactor.

The protein resides in the cytoplasm. It catalyses the reaction tRNA(Thr) + L-threonine + ATP = L-threonyl-tRNA(Thr) + AMP + diphosphate + H(+). In terms of biological role, catalyzes the attachment of threonine to tRNA(Thr) in a two-step reaction: L-threonine is first activated by ATP to form Thr-AMP and then transferred to the acceptor end of tRNA(Thr). Also edits incorrectly charged L-seryl-tRNA(Thr). The chain is Threonine--tRNA ligase from Anaeromyxobacter dehalogenans (strain 2CP-1 / ATCC BAA-258).